Here is a 436-residue protein sequence, read N- to C-terminus: 3-ketoacyl-CoA thiolase (436 aa).

The active-site Acyl-thioester intermediate is cysteine 99. Active-site proton acceptor residues include histidine 392 and cysteine 422.

The protein belongs to the thiolase-like superfamily. Thiolase family. Heterotetramer of two alpha chains (FadJ) and two beta chains (FadI).

The protein localises to the cytoplasm. The catalysed reaction is an acyl-CoA + acetyl-CoA = a 3-oxoacyl-CoA + CoA. The protein operates within lipid metabolism; fatty acid beta-oxidation. Its function is as follows. Catalyzes the final step of fatty acid oxidation in which acetyl-CoA is released and the CoA ester of a fatty acid two carbons shorter is formed. This Shewanella oneidensis (strain ATCC 700550 / JCM 31522 / CIP 106686 / LMG 19005 / NCIMB 14063 / MR-1) protein is 3-ketoacyl-CoA thiolase.